The following is a 598-amino-acid chain: NADH-ubiquinone oxidoreductase chain 5 (598 aa).

16 helical membrane-spanning segments follow: residues 1–21 (MLELWGVLSLTSLGVMVIFLF), 28–48 (FAESVKYAGYMNAVLLSILLM), 81–101 (CFFVVGLYVTWNILMFSFYYM), 115–135 (GLFLIAMLLLVSAESLFQLLI), 171–191 (GDIGLLIMLMWSLVTLGDWSF), 193–213 (GLYALDFVNTFFLLGVVLAAA), 233–253 (TPVSSLLHSSTMVVAGVFLLI), 265–285 (IQLMVFFLGTMTTLFSAICAL), 293–312 (VVAFSTASQLGLMVTAVGAG), 323–343 (MHAFFKAMLFMCSGSFIHGLQ), 362–382 (SVCFFIGSAALMGVPFLAGFF), 399–421 (WAVGLVLIATSFTAAYSVRLLYF), 454–474 (VIAGVVFIYFLSPNQISCLSL), 480–500 (LAAVFVTLVGGLIAWDVVNLL), 509–529 (IPELAFEAQVGFYPLIMHKLI), and 576–596 (LIKMYIAVMVMMGGLILGIMI).

Belongs to the complex I subunit 5 family.

It localises to the mitochondrion inner membrane. The catalysed reaction is a ubiquinone + NADH + 5 H(+)(in) = a ubiquinol + NAD(+) + 4 H(+)(out). Core subunit of the mitochondrial membrane respiratory chain NADH dehydrogenase (Complex I) that is believed to belong to the minimal assembly required for catalysis. Complex I functions in the transfer of electrons from NADH to the respiratory chain. The immediate electron acceptor for the enzyme is believed to be ubiquinone. The sequence is that of NADH-ubiquinone oxidoreductase chain 5 (ND5) from Branchiostoma lanceolatum (Common lancelet).